Reading from the N-terminus, the 86-residue chain is Small ribosomal subunit protein bS20 (86 aa).

Positions 1 to 26 (MANIKSAKKRAITSEKRRQHNASRRS) are disordered.

Belongs to the bacterial ribosomal protein bS20 family.

Its function is as follows. Binds directly to 16S ribosomal RNA. This Photobacterium profundum (strain SS9) protein is Small ribosomal subunit protein bS20.